The following is a 107-amino-acid chain: Iron-binding protein IscA (107 aa).

Fe cation is bound by residues Cys35, Cys99, and Cys101.

Belongs to the HesB/IscA family. In terms of assembly, homodimer; may form tetramers and higher multimers. The cofactor is Fe cation.

Is able to transfer iron-sulfur clusters to apo-ferredoxin. Multiple cycles of [2Fe2S] cluster formation and transfer are observed, suggesting that IscA acts catalytically. Recruits intracellular free iron so as to provide iron for the assembly of transient iron-sulfur cluster in IscU in the presence of IscS, L-cysteine and the thioredoxin reductase system TrxA/TrxB. The sequence is that of Iron-binding protein IscA from Serratia proteamaculans (strain 568).